Here is a 182-residue protein sequence, read N- to C-terminus: Orotate phosphoribosyltransferase (182 aa).

5-phospho-alpha-D-ribose 1-diphosphate-binding positions include arginine 91, lysine 92, lysine 95, histidine 97, and 117 to 125 (EDVTTTGGS). Residues threonine 121 and arginine 149 each coordinate orotate.

The protein belongs to the purine/pyrimidine phosphoribosyltransferase family. PyrE subfamily. As to quaternary structure, homodimer. Requires Mg(2+) as cofactor.

The catalysed reaction is orotidine 5'-phosphate + diphosphate = orotate + 5-phospho-alpha-D-ribose 1-diphosphate. It functions in the pathway pyrimidine metabolism; UMP biosynthesis via de novo pathway; UMP from orotate: step 1/2. In terms of biological role, catalyzes the transfer of a ribosyl phosphate group from 5-phosphoribose 1-diphosphate to orotate, leading to the formation of orotidine monophosphate (OMP). This is Orotate phosphoribosyltransferase from Pyrococcus furiosus (strain ATCC 43587 / DSM 3638 / JCM 8422 / Vc1).